The following is a 361-amino-acid chain: Phosphoserine aminotransferase (361 aa).

L-glutamate-binding residues include Ser-9 and Arg-42. Pyridoxal 5'-phosphate contacts are provided by residues 76-77 (AR), Trp-102, Thr-153, Asp-173, and Gln-196. Lys-197 is subject to N6-(pyridoxal phosphate)lysine. 238–239 (NT) contributes to the pyridoxal 5'-phosphate binding site.

The protein belongs to the class-V pyridoxal-phosphate-dependent aminotransferase family. SerC subfamily. In terms of assembly, homodimer. The cofactor is pyridoxal 5'-phosphate.

The protein localises to the cytoplasm. The enzyme catalyses O-phospho-L-serine + 2-oxoglutarate = 3-phosphooxypyruvate + L-glutamate. It carries out the reaction 4-(phosphooxy)-L-threonine + 2-oxoglutarate = (R)-3-hydroxy-2-oxo-4-phosphooxybutanoate + L-glutamate. The protein operates within amino-acid biosynthesis; L-serine biosynthesis; L-serine from 3-phospho-D-glycerate: step 2/3. It functions in the pathway cofactor biosynthesis; pyridoxine 5'-phosphate biosynthesis; pyridoxine 5'-phosphate from D-erythrose 4-phosphate: step 3/5. Functionally, catalyzes the reversible conversion of 3-phosphohydroxypyruvate to phosphoserine and of 3-hydroxy-2-oxo-4-phosphonooxybutanoate to phosphohydroxythreonine. This is Phosphoserine aminotransferase from Sodalis glossinidius (strain morsitans).